Reading from the N-terminus, the 184-residue chain is Ethylene-responsive transcription factor ERF024 (184 aa).

The interval 1–21 (MQGTSKDNGGRHPLYRGVRQR) is disordered. Residues 14-72 (LYRGVRQRKNSNKWVSEIREPRKPNRIWLGTFSTPEMAAIAYDVAALALKGSQAELNFP) constitute a DNA-binding region (AP2/ERF).

The protein belongs to the AP2/ERF transcription factor family. ERF subfamily.

The protein resides in the nucleus. Probably acts as a transcriptional activator. Binds to the GCC-box pathogenesis-related promoter element. May be involved in the regulation of gene expression by stress factors and by components of stress signal transduction pathways. The protein is Ethylene-responsive transcription factor ERF024 (ERF024) of Arabidopsis thaliana (Mouse-ear cress).